The primary structure comprises 666 residues: DNA mismatch repair protein MutL (666 aa).

This sequence belongs to the DNA mismatch repair MutL/HexB family.

In terms of biological role, this protein is involved in the repair of mismatches in DNA. It is required for dam-dependent methyl-directed DNA mismatch repair. May act as a 'molecular matchmaker', a protein that promotes the formation of a stable complex between two or more DNA-binding proteins in an ATP-dependent manner without itself being part of a final effector complex. The chain is DNA mismatch repair protein MutL from Clostridium botulinum (strain Langeland / NCTC 10281 / Type F).